A 345-amino-acid chain; its full sequence is KRR1 small subunit processome component homolog (345 aa).

In terms of domain architecture, KH spans 125-193 (DIIKIGNLVH…VRDIVLETMN (69 aa)). The segment covering 232 to 245 (NISKRKQPKVKKQK) has biased composition (basic residues). 2 disordered regions span residues 232–260 (NISK…ESKV) and 273–329 (QEQK…VDVK). The stretch at 270-298 (FLNQEQKQAKRNQERTEKQKEAAKRQDER) forms a coiled coil. Composition is skewed to basic and acidic residues over residues 276–302 (KQAK…RNKD) and 315–329 (LKKE…VDVK).

This sequence belongs to the KRR1 family. As to quaternary structure, monomer. Component of the ribosomal small subunit (SSU) processome.

The protein localises to the nucleus. The protein resides in the nucleolus. Its function is as follows. Required for 40S ribosome biogenesis. Involved in nucleolar processing of pre-18S ribosomal RNA and ribosome assembly. Binds to RNA. Required for female germline development, cell viability during eye development and for survival of dividing cells and epithelial cells during early wing disk development. In Drosophila erecta (Fruit fly), this protein is KRR1 small subunit processome component homolog.